A 120-amino-acid polypeptide reads, in one-letter code: U13-lycotoxin-Ls1a (120 aa).

The signal sequence occupies residues 1-16; it reads MKILFVLISILYAVYC. A propeptide spanning residues 17–54 is cleaved from the precursor; that stretch reads FSSEEDVDSAYLANELEPVEDINSEQYAALEPKEEQGR. 4 disulfides stabilise this stretch: cysteine 56/cysteine 70, cysteine 63/cysteine 76, cysteine 69/cysteine 87, and cysteine 78/cysteine 85. An Agouti domain is found at 56–95; that stretch reads CADMGQDCKDDCDCCLNIATCNCWFGRYFCSCTFGDYQTC.

It belongs to the neurotoxin 05 (agouti) family. In terms of processing, contains 6 disulfide bonds. Expressed by the venom gland.

The protein resides in the secreted. This Lycosa singoriensis (Wolf spider) protein is U13-lycotoxin-Ls1a.